We begin with the raw amino-acid sequence, 314 residues long: L-lactate dehydrogenase (314 aa).

Residues V17, D38, K43, Y69, and 83-84 each bind NAD(+); that span reads GA. Positions 86 and 92 each coordinate substrate. Residues S105, 122–124, and S147 contribute to the NAD(+) site; that span reads ASN. 124 to 127 provides a ligand contact to substrate; that stretch reads NPVD. Substrate is bound at residue 152–155; it reads DSAR. Beta-D-fructose 1,6-bisphosphate is bound by residues R157 and H172. H179 functions as the Proton acceptor in the catalytic mechanism. Y223 carries the phosphotyrosine modification. T232 provides a ligand contact to substrate.

The protein belongs to the LDH/MDH superfamily. LDH family. As to quaternary structure, homotetramer.

The protein resides in the cytoplasm. The enzyme catalyses (S)-lactate + NAD(+) = pyruvate + NADH + H(+). It functions in the pathway fermentation; pyruvate fermentation to lactate; (S)-lactate from pyruvate: step 1/1. With respect to regulation, allosterically activated by fructose 1,6-bisphosphate (FBP). In terms of biological role, catalyzes the conversion of lactate to pyruvate. The protein is L-lactate dehydrogenase of Corynebacterium glutamicum (strain ATCC 13032 / DSM 20300 / JCM 1318 / BCRC 11384 / CCUG 27702 / LMG 3730 / NBRC 12168 / NCIMB 10025 / NRRL B-2784 / 534).